Reading from the N-terminus, the 33-residue chain is VFCRFNGQQCTSDGQCCYGKCRTAFLRMICMGG.

Intrachain disulfides connect cysteine 3-cysteine 17, cysteine 10-cysteine 21, and cysteine 16-cysteine 30.

As to expression, expressed by the venom gland.

It is found in the secreted. Acts as a neurotoxin. In Phoneutria nigriventer (Brazilian armed spider), this protein is U13-ctenitoxin-Pn1c.